A 65-amino-acid chain; its full sequence is Large ribosomal subunit protein bL35 (65 aa).

The span at 1 to 16 shows a compositional bias: basic residues; sequence MVPKQKTHSGAKKRFK. The disordered stretch occupies residues 1 to 39; that stretch reads MVPKQKTHSGAKKRFKLTGSGSVSRARAGMRHNFEHRSS.

The protein belongs to the bacterial ribosomal protein bL35 family.

This Tropheryma whipplei (strain TW08/27) (Whipple's bacillus) protein is Large ribosomal subunit protein bL35.